A 419-amino-acid chain; its full sequence is C2 calcium-dependent domain-containing protein 4C (419 aa).

Disordered regions lie at residues 1-96, 115-136, 151-225, and 247-300; these read MRKT…LASE, EDWTAEEATNADPQAQGAMSLP, AESP…SPFG, and VSQL…HTVK. A compositionally biased stretch (low complexity) spans 75–94; the sequence is LASPGPRRAPRSPRLPAKLA. The span at 186–196 shows a compositional bias: gly residues; it reads KGNGGDGGSRE. Residues 212–225 are compositionally biased toward polar residues; that stretch reads ESDTGSSAESSPFG. 3 positions are modified to phosphoserine: S259, S261, and S270. Residues 303–419 enclose the C2 domain; that stretch reads TRGSVRLLAE…LPLTSLLPFL (117 aa).

Belongs to the C2CD4 family.

This Mus musculus (Mouse) protein is C2 calcium-dependent domain-containing protein 4C (C2cd4c).